The following is a 162-amino-acid chain: Ribosome maturation factor RimP (162 aa).

This sequence belongs to the RimP family.

It localises to the cytoplasm. Its function is as follows. Required for maturation of 30S ribosomal subunits. The polypeptide is Ribosome maturation factor RimP (Cupriavidus metallidurans (strain ATCC 43123 / DSM 2839 / NBRC 102507 / CH34) (Ralstonia metallidurans)).